The sequence spans 515 residues: AAA ATPase forming ring-shaped complexes (515 aa).

Positions asparagine 2–glycine 49 form a coiled coil. Residue glycine 240–leucine 245 coordinates ATP.

Belongs to the AAA ATPase family. In terms of assembly, homohexamer. Assembles into a hexameric ring structure.

In Bifidobacterium adolescentis (strain ATCC 15703 / DSM 20083 / NCTC 11814 / E194a), this protein is AAA ATPase forming ring-shaped complexes.